The sequence spans 369 residues: Chorismate synthase (369 aa).

2 residues coordinate NADP(+): Arg48 and Arg54. FMN contacts are provided by residues 125–127 (RSS), 238–239 (NA), Gly278, 293–297 (KPTSS), and Arg319.

The protein belongs to the chorismate synthase family. Homotetramer. FMNH2 is required as a cofactor.

The catalysed reaction is 5-O-(1-carboxyvinyl)-3-phosphoshikimate = chorismate + phosphate. It functions in the pathway metabolic intermediate biosynthesis; chorismate biosynthesis; chorismate from D-erythrose 4-phosphate and phosphoenolpyruvate: step 7/7. Functionally, catalyzes the anti-1,4-elimination of the C-3 phosphate and the C-6 proR hydrogen from 5-enolpyruvylshikimate-3-phosphate (EPSP) to yield chorismate, which is the branch point compound that serves as the starting substrate for the three terminal pathways of aromatic amino acid biosynthesis. This reaction introduces a second double bond into the aromatic ring system. In Burkholderia pseudomallei (strain 1106a), this protein is Chorismate synthase.